The sequence spans 306 residues: Ornithine carbamoyltransferase (306 aa).

Carbamoyl phosphate-binding positions include S46 to T49, Q73, R97, and H124 to Q127. L-ornithine-binding positions include N156, D220, and S224–M225. Carbamoyl phosphate contacts are provided by residues C260–L261 and R288.

This sequence belongs to the aspartate/ornithine carbamoyltransferase superfamily. OTCase family.

The protein localises to the cytoplasm. It carries out the reaction carbamoyl phosphate + L-ornithine = L-citrulline + phosphate + H(+). It functions in the pathway amino-acid degradation; L-arginine degradation via ADI pathway; carbamoyl phosphate from L-arginine: step 2/2. Reversibly catalyzes the transfer of the carbamoyl group from carbamoyl phosphate (CP) to the N(epsilon) atom of ornithine (ORN) to produce L-citrulline. The polypeptide is Ornithine carbamoyltransferase (Campylobacter jejuni subsp. doylei (strain ATCC BAA-1458 / RM4099 / 269.97)).